Consider the following 386-residue polypeptide: Trichocyst matrix protein T2-A (386 aa).

An N-terminal signal peptide occupies residues methionine 1–alanine 19. Positions aspartate 20–glycine 48 are excised as a propeptide. Residues leucine 51–lysine 154 are a coiled coil. A propeptide spanning residues lysine 184–glutamine 238 is cleaved from the precursor. The stretch at serine 293–aspartate 332 forms a coiled coil.

The protein belongs to the TMP family.

It localises to the trichocyst. Its function is as follows. Structural protein that crystallize inside the trichocyst matrix. The polypeptide is Trichocyst matrix protein T2-A (T2A) (Paramecium tetraurelia).